The sequence spans 365 residues: UDP-N-acetylglucosamine--N-acetylmuramyl-(pentapeptide) pyrophosphoryl-undecaprenol N-acetylglucosamine transferase (365 aa).

Residues 19–21, N131, R170, S201, I255, 274–279, and Q300 contribute to the UDP-N-acetyl-alpha-D-glucosamine site; these read TGG and ALTVTE.

It belongs to the glycosyltransferase 28 family. MurG subfamily.

The protein resides in the cell inner membrane. The enzyme catalyses di-trans,octa-cis-undecaprenyl diphospho-N-acetyl-alpha-D-muramoyl-L-alanyl-D-glutamyl-meso-2,6-diaminopimeloyl-D-alanyl-D-alanine + UDP-N-acetyl-alpha-D-glucosamine = di-trans,octa-cis-undecaprenyl diphospho-[N-acetyl-alpha-D-glucosaminyl-(1-&gt;4)]-N-acetyl-alpha-D-muramoyl-L-alanyl-D-glutamyl-meso-2,6-diaminopimeloyl-D-alanyl-D-alanine + UDP + H(+). The protein operates within cell wall biogenesis; peptidoglycan biosynthesis. In terms of biological role, cell wall formation. Catalyzes the transfer of a GlcNAc subunit on undecaprenyl-pyrophosphoryl-MurNAc-pentapeptide (lipid intermediate I) to form undecaprenyl-pyrophosphoryl-MurNAc-(pentapeptide)GlcNAc (lipid intermediate II). The chain is UDP-N-acetylglucosamine--N-acetylmuramyl-(pentapeptide) pyrophosphoryl-undecaprenol N-acetylglucosamine transferase from Acinetobacter baylyi (strain ATCC 33305 / BD413 / ADP1).